Consider the following 212-residue polypeptide: Calaxin (212 aa).

EF-hand domains follow at residues 65–100, 101–136, and 146–181; these read TDDM…FLRG, TLDE…SLLK, and GIKD…ENLL. The Ca(2+) site is built by aspartate 78, aspartate 80, aspartate 82, cysteine 84, glutamate 89, aspartate 114, asparagine 116, aspartate 118, glutamate 125, aspartate 159, aspartate 161, aspartate 163, lysine 165, and aspartate 170.

In terms of assembly, component of the outer dynein arm-docking complex along with ODAD1, ODAD2, ODAD3 and ODAD4.

It localises to the cytoplasm. It is found in the cytoskeleton. The protein localises to the cilium axoneme. Its subcellular location is the cell projection. The protein resides in the cilium. It localises to the flagellum. Component of the outer dynein arm-docking complex (ODA-DC) that mediates outer dynein arms (ODA) binding onto the doublet microtubule. Seems to regulate the assembly of both ODAs and their axonemal docking complex onto ciliary microtubules. Regulates ciliary and flagellar motility and is required for cilia-driven determination of body laterality. This Mus musculus (Mouse) protein is Calaxin (Clxn).